A 91-amino-acid chain; its full sequence is Putative regulatory protein CLB_2388 (91 aa).

Belongs to the RemA family.

The protein is Putative regulatory protein CLB_2388 of Clostridium botulinum (strain ATCC 19397 / Type A).